A 476-amino-acid chain; its full sequence is Serine/threonine-protein kinase Chk1 (476 aa).

The Protein kinase domain maps to 9–265 (WDLVQTLGEG…IPDIKKDRWY (257 aa)). Residues 15 to 23 (LGEGAYGEV) and Lys-38 contribute to the ATP site. The active-site Proton acceptor is the Asp-130. The segment at 272 to 329 (GTKRGRVSSGGVTESPGALPKHIRSDTDFSPVKSALGEDKASYSTSQPEPGTGGALWD) is disordered. Phosphoserine; by PKB/AKT1 is present on Ser-280. A Phosphoserine modification is found at Ser-296. At Ser-317 the chain carries Phosphoserine; by ATM and ATR. At Ser-345 the chain carries Phosphoserine. The interval 391–476 (RSLRDVCEKM…STQKVWLPPP (86 aa)) is autoinhibitory region.

Belongs to the protein kinase superfamily. CAMK Ser/Thr protein kinase family. NIM1 subfamily. Phosphorylated by ATR in a RAD17-dependent manner in response to ultraviolet irradiation and inhibition of DNA replication. Phosphorylated by ATM in response to ionizing irradiation. Phosphorylation at Ser-345 induces a change in the conformation of the protein and activates the kinase activity. Phosphorylation at Ser-345 also increases binding to 14-3-3 proteins and promotes nuclear retention.

The protein resides in the nucleus. It localises to the chromosome. The protein localises to the cytoplasm. Its subcellular location is the cytoskeleton. It is found in the microtubule organizing center. The protein resides in the centrosome. The catalysed reaction is L-seryl-[protein] + ATP = O-phospho-L-seryl-[protein] + ADP + H(+). It carries out the reaction L-threonyl-[protein] + ATP = O-phospho-L-threonyl-[protein] + ADP + H(+). With respect to regulation, activated through phosphorylation by atr or atm in response to DNA damage or inhibition of DNA replication. Functionally, serine/threonine-protein kinase which is required for checkpoint-mediated cell cycle arrest and activation of DNA repair in response to the presence of DNA damage or unreplicated DNA. May also negatively regulate cell cycle progression during unperturbed cell cycles. This regulation is achieved by a number of mechanisms that together help to preserve the integrity of the genome. Recognizes the substrate consensus sequence [R-X-X-S/T]. Binds to and phosphorylates CDC25A, CDC25B and CDC25C. This inhibits their activity through proteasomal degradation, nucleo-cytoplasmic shuttling and inhibition by proteins of the 13-3-3 family. Inhibition of CDC25 leads to increased inhibitory tyrosine phosphorylation of CDK-cyclin complexes and blocks cell cycle progression. May promote DNA repair, regulate chromatin assembly and the transcription of genes that regulate cell-cycle progression. May also play a role in replication fork maintenance. This Gallus gallus (Chicken) protein is Serine/threonine-protein kinase Chk1 (CHEK1).